Consider the following 103-residue polypeptide: UPF0235 protein Dole_0289 (103 aa).

The protein belongs to the UPF0235 family.

The sequence is that of UPF0235 protein Dole_0289 from Desulfosudis oleivorans (strain DSM 6200 / JCM 39069 / Hxd3) (Desulfococcus oleovorans).